A 96-amino-acid chain; its full sequence is Co-chaperonin GroES (96 aa).

It belongs to the GroES chaperonin family. As to quaternary structure, heptamer of 7 subunits arranged in a ring. Interacts with the chaperonin GroEL.

The protein localises to the cytoplasm. Its function is as follows. Together with the chaperonin GroEL, plays an essential role in assisting protein folding. The GroEL-GroES system forms a nano-cage that allows encapsulation of the non-native substrate proteins and provides a physical environment optimized to promote and accelerate protein folding. GroES binds to the apical surface of the GroEL ring, thereby capping the opening of the GroEL channel. The protein is Co-chaperonin GroES of Alcanivorax borkumensis (strain ATCC 700651 / DSM 11573 / NCIMB 13689 / SK2).